The sequence spans 147 residues: Large ribosomal subunit protein uL13 (147 aa).

It belongs to the universal ribosomal protein uL13 family. In terms of assembly, part of the 50S ribosomal subunit.

In terms of biological role, this protein is one of the early assembly proteins of the 50S ribosomal subunit, although it is not seen to bind rRNA by itself. It is important during the early stages of 50S assembly. The polypeptide is Large ribosomal subunit protein uL13 (Mycobacteroides abscessus (strain ATCC 19977 / DSM 44196 / CCUG 20993 / CIP 104536 / JCM 13569 / NCTC 13031 / TMC 1543 / L948) (Mycobacterium abscessus)).